A 384-amino-acid polypeptide reads, in one-letter code: CDP-diacylglycerol--serine O-phosphatidyltransferase (384 aa).

This sequence belongs to the CDP-alcohol phosphatidyltransferase class-I family.

It localises to the membrane. The catalysed reaction is a CDP-1,2-diacyl-sn-glycerol + L-serine = a 1,2-diacyl-sn-glycero-3-phospho-L-serine + CMP + H(+). The protein operates within phospholipid metabolism; phosphatidylethanolamine biosynthesis; phosphatidylethanolamine from CDP-diacylglycerol: step 1/2. This Encephalitozoon cuniculi (strain GB-M1) (Microsporidian parasite) protein is CDP-diacylglycerol--serine O-phosphatidyltransferase (PSS).